We begin with the raw amino-acid sequence, 262 residues long: Malonyl-[acyl-carrier protein] O-methyltransferase (262 aa).

It belongs to the methyltransferase superfamily.

The enzyme catalyses malonyl-[ACP] + S-adenosyl-L-methionine = malonyl-[ACP] methyl ester + S-adenosyl-L-homocysteine. The protein operates within cofactor biosynthesis; biotin biosynthesis. Functionally, converts the free carboxyl group of a malonyl-thioester to its methyl ester by transfer of a methyl group from S-adenosyl-L-methionine (SAM). It allows to synthesize pimeloyl-ACP via the fatty acid synthetic pathway. The sequence is that of Malonyl-[acyl-carrier protein] O-methyltransferase from Erwinia pyrifoliae (strain DSM 12163 / CIP 106111 / Ep16/96).